Here is a 299-residue protein sequence, read N- to C-terminus: Protease HtpX homolog (299 aa).

Helical transmembrane passes span 14–34 (WLLL…VGNL) and 39–59 (GFGG…TMIF). A Zn(2+)-binding site is contributed by His-143. The active site involves Glu-144. Position 147 (His-147) interacts with Zn(2+). Helical transmembrane passes span 153-173 (IRIS…AGMA) and 198-218 (IVFL…ATLV). Glu-227 is a Zn(2+) binding site.

The protein belongs to the peptidase M48B family. Requires Zn(2+) as cofactor.

The protein resides in the cell membrane. This Streptococcus thermophilus (strain ATCC BAA-250 / LMG 18311) protein is Protease HtpX homolog.